Here is a 111-residue protein sequence, read N- to C-terminus: MNHYLLLLFVIFLTCAGQLSQKQATHSWKENAKRQTLIWLGLSVIFLAGGMLLWLKLLQYLPLSQAYPFLSINLILVTLSGHFFFKEKVTLQHWLGIGIMMVGILLLGQGI.

3 helical membrane passes run 37 to 57, 65 to 85, and 91 to 111; these read LIWL…WLKL, QAYP…HFFF, and LQHW…GQGI.

The protein belongs to the ArnE family. As to quaternary structure, heterodimer of ArnE and ArnF.

The protein resides in the cell inner membrane. Its pathway is bacterial outer membrane biogenesis; lipopolysaccharide biosynthesis. Functionally, translocates 4-amino-4-deoxy-L-arabinose-phosphoundecaprenol (alpha-L-Ara4N-phosphoundecaprenol) from the cytoplasmic to the periplasmic side of the inner membrane. In Hamiltonella defensa subsp. Acyrthosiphon pisum (strain 5AT), this protein is Probable 4-amino-4-deoxy-L-arabinose-phosphoundecaprenol flippase subunit ArnE.